The sequence spans 297 residues: N-acetylmuramic acid 6-phosphate etherase (297 aa).

Residues 55–218 enclose the SIS domain; that stretch reads AAAALKSGGR…STGAMVKFGK (164 aa). Glu-83 (proton donor) is an active-site residue. Glu-114 is a catalytic residue.

The protein belongs to the GCKR-like family. MurNAc-6-P etherase subfamily. In terms of assembly, homodimer.

It carries out the reaction N-acetyl-D-muramate 6-phosphate + H2O = N-acetyl-D-glucosamine 6-phosphate + (R)-lactate. It participates in amino-sugar metabolism; 1,6-anhydro-N-acetylmuramate degradation. The protein operates within amino-sugar metabolism; N-acetylmuramate degradation. Its pathway is cell wall biogenesis; peptidoglycan recycling. Functionally, specifically catalyzes the cleavage of the D-lactyl ether substituent of MurNAc 6-phosphate, producing GlcNAc 6-phosphate and D-lactate. Together with AnmK, is also required for the utilization of anhydro-N-acetylmuramic acid (anhMurNAc) either imported from the medium or derived from its own cell wall murein, and thus plays a role in cell wall recycling. This Salmonella paratyphi B (strain ATCC BAA-1250 / SPB7) protein is N-acetylmuramic acid 6-phosphate etherase.